Here is a 381-residue protein sequence, read N- to C-terminus: Creatine kinase B-type (381 aa).

The residue at position 4 (S4) is a Phosphoserine. The Phosphagen kinase N-terminal domain maps to 11–98 (KLRFPAEDEF…FDPIIEDRHG (88 aa)). Position 35 is a phosphothreonine (T35). A Glycyl lysine isopeptide (Lys-Gly) (interchain with G-Cter in ubiquitin) cross-link involves residue K45. A creatine-binding site is contributed by V72. Residues 96-110 (RHGGYKPSDEHKTDL) are compositionally biased toward basic and acidic residues. Residues 96 to 123 (RHGGYKPSDEHKTDLNPDNLQGGDDLDP) are disordered. Residues K101 and K107 each participate in a glycyl lysine isopeptide (Lys-Gly) (interchain with G-Cter in ubiquitin) cross-link. A Phosphotyrosine modification is found at Y125. The 243-residue stretch at 125–367 (YVLSSRVRTG…KLLIEMEQRL (243 aa)) folds into the Phosphagen kinase C-terminal domain. ATP is bound by residues 128 to 132 (SSRVR), R130, R132, and H191. Residues 130–138 (RVRTGRSIR) form an internal MTS-like signal region. S199 bears the Phosphoserine mark. E232 is a creatine binding site. Residue R236 participates in ATP binding. The residue at position 269 (Y269) is a 3'-nitrotyrosine. S285 provides a ligand contact to creatine. Residue R292 coordinates ATP. S309 is subject to Phosphoserine. Residues R320, 320–325 (RGTGGV), and D335 each bind ATP. T322 is modified (phosphothreonine). K381 participates in a covalent cross-link: Glycyl lysine isopeptide (Lys-Gly) (interchain with G-Cter in ubiquitin).

Belongs to the ATP:guanido phosphotransferase family. In terms of assembly, dimer of identical or non-identical chains, which can be either B (brain type) or M (muscle type). With MM being the major form in skeletal muscle and myocardium, MB existing in myocardium, and BB existing in many tissues, especially brain. Interacts with SLC12A6 (via C-terminus); the interaction may be required for SLC12A6 potassium-chloride cotransport activity. Post-translationally, ubiquitinated by the ECS(ASB9) complex, leading to its degradation by the proteasome.

Its subcellular location is the cytoplasm. It is found in the cytosol. The protein resides in the mitochondrion. The protein localises to the cell membrane. The catalysed reaction is creatine + ATP = N-phosphocreatine + ADP + H(+). Reversibly catalyzes the transfer of phosphate between ATP and various phosphogens (e.g. creatine phosphate). Creatine kinase isoenzymes play a central role in energy transduction in tissues with large, fluctuating energy demands, such as skeletal muscle, heart, brain and spermatozoa. Acts as a key regulator of adaptive thermogenesis as part of the futile creatine cycle: localizes to the mitochondria of thermogenic fat cells and acts by mediating phosphorylation of creatine to initiate a futile cycle of creatine phosphorylation and dephosphorylation. During the futile creatine cycle, creatine and N-phosphocreatine are in a futile cycle, which dissipates the high energy charge of N-phosphocreatine as heat without performing any mechanical or chemical work. This Oryctolagus cuniculus (Rabbit) protein is Creatine kinase B-type (CKB).